We begin with the raw amino-acid sequence, 537 residues long: CTP synthase (537 aa).

The interval 1 to 269 is amidoligase domain; the sequence is MNQTKYIFVT…DKVALKKLDL (269 aa). Serine 15 is a binding site for CTP. Residue serine 15 coordinates UTP. Position 16 to 21 (16 to 21) interacts with ATP; the sequence is SLGKGI. Tyrosine 56 contacts L-glutamine. Aspartate 73 provides a ligand contact to ATP. 2 residues coordinate Mg(2+): aspartate 73 and glutamate 143. CTP-binding positions include 150-152, 190-195, and lysine 226; these read DIE and KTKPTQ. Residues 190–195 and lysine 226 each bind UTP; that span reads KTKPTQ. In terms of domain architecture, Glutamine amidotransferase type-1 spans 295–537; that stretch reads SIGLVGKYVE…IAAAVKHKNK (243 aa). Glycine 357 contributes to the L-glutamine binding site. Cysteine 384 acts as the Nucleophile; for glutamine hydrolysis in catalysis. Residues 385–388, glutamate 408, and arginine 465 each bind L-glutamine; that span reads LGMQ. Active-site residues include histidine 510 and glutamate 512.

Belongs to the CTP synthase family. Homotetramer.

The catalysed reaction is UTP + L-glutamine + ATP + H2O = CTP + L-glutamate + ADP + phosphate + 2 H(+). The enzyme catalyses L-glutamine + H2O = L-glutamate + NH4(+). It carries out the reaction UTP + NH4(+) + ATP = CTP + ADP + phosphate + 2 H(+). It participates in pyrimidine metabolism; CTP biosynthesis via de novo pathway; CTP from UDP: step 2/2. Its activity is regulated as follows. Allosterically activated by GTP, when glutamine is the substrate; GTP has no effect on the reaction when ammonia is the substrate. The allosteric effector GTP functions by stabilizing the protein conformation that binds the tetrahedral intermediate(s) formed during glutamine hydrolysis. Inhibited by the product CTP, via allosteric rather than competitive inhibition. Its function is as follows. Catalyzes the ATP-dependent amination of UTP to CTP with either L-glutamine or ammonia as the source of nitrogen. Regulates intracellular CTP levels through interactions with the four ribonucleotide triphosphates. The polypeptide is CTP synthase (Flavobacterium psychrophilum (strain ATCC 49511 / DSM 21280 / CIP 103535 / JIP02/86)).